The sequence spans 521 residues: Ribonuclease Y 1 (521 aa).

The chain crosses the membrane as a helical span at residues 1-21 (MEIVISAIIGLLIGGTVVFVI). A disordered region spans residues 51–87 (IKKESENKAKDFESRARKNVEQDIHKQKSTLKNKESQ). Residues 211 to 271 (TVSVLALPND…VRRELARRTI (61 aa)) form the KH domain. The 94-residue stretch at 337–430 (ALNQSLEVAT…VHAAYTLSSS (94 aa)) folds into the HD domain.

The protein belongs to the RNase Y family.

It localises to the cell membrane. Functionally, endoribonuclease that initiates mRNA decay. The sequence is that of Ribonuclease Y 1 from Bdellovibrio bacteriovorus (strain ATCC 15356 / DSM 50701 / NCIMB 9529 / HD100).